We begin with the raw amino-acid sequence, 732 residues long: Kell blood group glycoprotein (732 aa).

The tract at residues 1 to 37 is disordered; sequence MEGGDQSEEEPRERSQAGGMGTLWSQESTPEERLPVE. The Cytoplasmic segment spans residues 1–47; the sequence is MEGGDQSEEEPRERSQAGGMGTLWSQESTPEERLPVEGSRPWAVARR. Ser7 carries the post-translational modification Phosphoserine. The chain crosses the membrane as a helical; Signal-anchor for type II membrane protein span at residues 48-67; it reads VLTAILILGLLLCFSVLLFY. Over 68 to 732 the chain is Extracellular; that stretch reads NFQNCGPRPC…LNPSSRCQLW (665 aa). Residues 76 to 732 enclose the Peptidase M13 domain; the sequence is PCETSVCLDL…LNPSSRCQLW (657 aa). Cys77 and Cys82 form a disulfide bridge. Asn94 and Asn115 each carry an N-linked (GlcNAc...) asparagine glycan. Intrachain disulfides connect Cys100–Cys717, Cys108–Cys682, Cys155–Cys410, and Cys610–Cys729. N-linked (GlcNAc...) asparagine; in KEL2 antigen glycosylation is present at Asn191. The N-linked (GlcNAc...) asparagine glycan is linked to Asn345. Position 581 (His581) interacts with Zn(2+). Glu582 is a catalytic residue. Residue His585 participates in Zn(2+) binding. Residue Asn627 is glycosylated (N-linked (GlcNAc...) asparagine). Glu634 is a Zn(2+) binding site. Asp638 serves as the catalytic Proton donor. The tract at residues 684–703 is disordered; the sequence is KPSPQDSHDTHSPPHLRVHG.

The protein belongs to the peptidase M13 family. As to quaternary structure, heterodimer with XK; disulfide-linked. The cofactor is Zn(2+). N-glycosylated. In terms of tissue distribution, expressed at high levels in erythrocytes and testis (in Sertoli cells), and, at lower levels, in skeletal muscle, tonsils (in follicular dendritic cells), lymph node, spleen and appendix (at protein level). Also expressed in many adult and fetal nonerythroid tissues, including brain, spleen, lymph nodes and bone marrow.

The protein resides in the cell membrane. Its function is as follows. Zinc endopeptidase with endothelin-3-converting enzyme activity. Cleaves EDN1, EDN2 and EDN3, with a marked preference for EDN3. The polypeptide is Kell blood group glycoprotein (KEL) (Homo sapiens (Human)).